An 870-amino-acid polypeptide reads, in one-letter code: DNA mismatch repair protein MutS (870 aa).

Residue 608-615 (GPNMAGKS) participates in ATP binding.

This sequence belongs to the DNA mismatch repair MutS family.

In terms of biological role, this protein is involved in the repair of mismatches in DNA. It is possible that it carries out the mismatch recognition step. This protein has a weak ATPase activity. This is DNA mismatch repair protein MutS from Persephonella marina (strain DSM 14350 / EX-H1).